A 582-amino-acid chain; its full sequence is Potassium voltage-gated channel subfamily KQT member 1 (582 aa).

At 1-31 (RVSIYSARRPLLARTHIQGRVYNFLERPTGW) the chain is on the cytoplasmic side. The chain crosses the membrane as a helical span at residues 32–53 (KCFVYHFAVFLIVLVCLIFSVL). Over 54-64 (STIEQYVALAT) the chain is Extracellular. A helical transmembrane segment spans residues 65–87 (GTLFWMEIVLVVFFGTEYVVRLW). Topologically, residues 88–103 (SAGCRSKYVGVWGRLR) are cytoplasmic. Residues 104 to 129 (FARKPISIIDLIVVLASMVVLCVGSK) traverse the membrane as a helical segment. At 130 to 137 (GQVFATSA) the chain is on the extracellular side. Residues 138–153 (IRGIRFLQILRMLHVD) traverse the membrane as a helical; Voltage-sensor segment. The interval 149 to 157 (MLHVDRQGG) is interaction with KCNE3. The Cytoplasmic segment spans residues 154-171 (RQGGTWRLLGSVVFIHRQ). Q155 serves as a coordination point for a 1,2-diacyl-sn-glycero-3-phospho-(1D-myo-inositol-4,5-bisphosphate). A helical transmembrane segment spans residues 172 to 194 (ELITTLYIGFLGLIFSSYFVYLA). Residues 195–210 (EKDAVNESGQVEFGSY) are Extracellular-facing. A glycan (N-linked (GlcNAc...) asparagine) is linked at N200. An intramembrane region (pore-forming) is located at residues 211 to 231 (ADALWWGVVTVTTIGYGDKVP). The Extracellular portion of the chain corresponds to 232 to 233 (QT). A helical membrane pass occupies residues 234-259 (WVGKTIASCFSVFAISFFALPAGILG). Residues 260 to 582 (SGFALKVQQK…VPRRGPEEGS (323 aa)) are Cytoplasmic-facing. The segment at 281-293 (AAASLIQTAWRCY) is interaction with CALM. Phosphoserine is present on residues S318 and S320. The segment at 426–440 (KVIRRMQYFVAKKKF) is interaction with CALM; calcium-dependent. The interaction with KCNE1 C-terminus stretch occupies residues 446–483 (PYDVRDVIEQYSQGHLNLMVRIKELQRRLDQSIGKPSL). Positions 496 to 532 (SNTIGARLNRVEDKVAQLDQRLVLITDMLQQLLSLHH) form a coiled coil. The interval 499–527 (IGARLNRVEDKVAQLDQRLVLITDMLQQL) is interaction with AKAP9. A C-terminal assembly domain (tetramerization) region spans residues 500 to 531 (GARLNRVEDKVAQLDQRLVLITDMLQQLLSLH). Residues 530-582 (LHHGGPPGSRPPSGGGAQVQPCGPTNPELFLPGNALPTYEQLTVPRRGPEEGS) form a disordered region.

The protein belongs to the potassium channel family. KQT (TC 1.A.1.15) subfamily. Kv7.1/KCNQ1 sub-subfamily. In terms of assembly, tetramer. Heterotetramer with KCNE1; targets to the membrane raft. Interacts (via C-terminus) with CALM; forms a heterooctameric structure (with 4:4 KCNQ1:CALM stoichiometry) in a calcium-independent manner. Interacts with AKAP9; targets protein kinase A (PKA) catalytic and regulatory subunits and protein phosphatase 1 (PP1) to the KCNQ1-KCNE1 complex, allowing PKA-mediated phosphorylation and increase of delayed rectifier potassium channel activity. Interacts with KCNE2; form a heterooligomer complex that targets to the membrane raft and leading to currents with an apparently instantaneous activation, a rapid deactivation process and a linear current-voltage relationship and decreases the amplitude of the outward current. Interacts with AP2M1; mediates estrogen-induced internalization via clathrin-coated vesicles. Interacts with NEDD4L; promotes internalization and decreases I(Ks) currents. Interacts with USP2; counteracts the NEDD4L-specific down-regulation of I(Ks) and restore plasma membrane localization. Heterotetramer with KCNQ5; has a voltage-gated potassium channel activity. Interacts with KCNE3; four KCNE3 molecules are bound to one KCNQ1 tetramer (4:4 KCNQ1:KCNE3 stoichiometry); alters membrane raft localization; affects KCNQ1 structure and gating properties. Interacts with KCNE4; impairs KCNQ1 localization in lipid rafts and inhibits voltage-gated potassium channel activity. Interacts with KCNE5; impairs KCNQ1 localization in lipid rafts and only conducts current upon strong and continued depolarization. In terms of processing, phosphorylated by PKA; increases delayed rectifier potassium channel activity of the KCNQ1-KCNE1 complex through a macromolecular complex that includes PKA, PP1, and the targeting protein AKAP9. Post-translationally, ubiquitinated by NEDD4L; promotes internalization. The ubiquitinylated form is internalized through a clathrin-mediated endocytosis by interacting with AP2M1 and is recycled back to the cell membrane via RAB4A and RAB11A. Deubiquitinated by USP2; counteracts the NEDD4L-specific down-regulation of I(Ks) and restores the membrane localization.

It localises to the cell membrane. Its subcellular location is the cytoplasmic vesicle membrane. The protein resides in the early endosome. The protein localises to the membrane raft. It is found in the endoplasmic reticulum. It localises to the basolateral cell membrane. The enzyme catalyses K(+)(in) = K(+)(out). With respect to regulation, PIP2 molecule is essential to activate KCNQ channels by inducing the coupling of the voltage-sensing domain (VSD) and the pore-forming domain (PD). Upon channel activation, PIP2 disrupts the VSD-calmodulin/CALM interactions, causing the release of CALM from the VSD which triggers the opening of the gate. Calcium potentiates KCNQ1 channel current through calcium-bound CALM. Calcium-bound CALM competes with PIP2 to stabilize the channel open state. Pore-forming subunit of the voltage-gated potassium (Kv) channel involved in the regulation of cardiomyocyte excitability and important in normal development and functions of myocardium, inner ear, stomach and colon. Associates with KCNE beta subunits that modulates current kinetics. Induces a voltage-dependent by rapidly activating and slowly deactivating potassium-selective outward current. Also promotes a delayed voltage activated potassium current showing outward rectification characteristic. During beta-adrenergic receptor stimulation participates in cardiac repolarization by associating with KCNE1 to form the I(Ks) cardiac potassium current that increases the amplitude and slows down the activation kinetics of outward potassium current I(Ks). Muscarinic agonist oxotremorine-M strongly suppresses KCNQ1/KCNE1 current. When associated with KCNE3, forms the potassium channel that is important for cyclic AMP-stimulated intestinal secretion of chloride ions. This interaction with KCNE3 is reduced by 17beta-estradiol, resulting in the reduction of currents. During conditions of increased substrate load, maintains the driving force for proximal tubular and intestinal sodium ions absorption, gastric acid secretion, and cAMP-induced jejunal chloride ions secretion. Allows the provision of potassium ions to the luminal membrane of the secretory canaliculus in the resting state as well as during stimulated acid secretion. When associated with KCNE2, forms a heterooligomer complex leading to currents with an apparently instantaneous activation, a rapid deactivation process and a linear current-voltage relationship and decreases the amplitude of the outward current. When associated with KCNE4, inhibits voltage-gated potassium channel activity. When associated with KCNE5, this complex only conducts current upon strong and continued depolarization. Also forms a heterotetramer with KCNQ5 that has a voltage-gated potassium channel activity. Binds with phosphatidylinositol 4,5-bisphosphate. The polypeptide is Potassium voltage-gated channel subfamily KQT member 1 (Felis catus (Cat)).